Reading from the N-terminus, the 198-residue chain is Small ribosomal subunit protein uS2 (198 aa).

The protein belongs to the universal ribosomal protein uS2 family.

The sequence is that of Small ribosomal subunit protein uS2 from Methanobrevibacter smithii (strain ATCC 35061 / DSM 861 / OCM 144 / PS).